The following is an 821-amino-acid chain: Calpain-3 (821 aa).

The interval 1 to 34 (MPTVISASMAPRTGASQVPRTMPQAAQGKGTEAG) is disordered. The 345-residue stretch at 73-417 (LYLDPEFPPD…FTKLEICNLT (345 aa)) folds into the Calpain catalytic domain. Catalysis depends on residues Cys-128, His-334, and Asn-358. The tract at residues 418-586 (ADALESDKLQ…KRNLSEEVEN (169 aa)) is domain III. Residues 587–649 (TISVDRPVRK…EPSNTDQESE (63 aa)) form a linker region. Positions 603–652 (IFVSDRANSNKELGVDQESEEGQDKTSPDKQEKSPKPEPSNTDQESEEQQ) are disordered. Positions 624 to 638 (GQDKTSPDKQEKSPK) are enriched in basic and acidic residues. Over residues 641-652 (PSNTDQESEEQQ) the composition is skewed to polar residues. EF-hand domains lie at 649–683 (EEQQ…VVNK), 692–725 (FTLE…KKIK), 722–757 (KKIK…AGFH), and 787–821 (VRLE…TMYA). Residues 650–821 (EQQQFRNIFR…LEWLQLTMYA (172 aa)) are domain IV. 18 residues coordinate Ca(2+): Ala-662, Asp-665, Glu-667, Glu-672, Asp-705, Asp-707, Ser-709, Arg-711, Glu-716, Asp-735, Asp-737, Ser-739, Thr-741, Glu-746, Asp-800, Asp-802, Asp-804, and Ile-806.

It belongs to the peptidase C2 family. In terms of assembly, homodimer; via EF-hand domain 4. Interacts with TTN/titin. Interacts with CMYA5; this interaction, which results in CMYA5 proteolysis, may protect CAPN3 from autolysis. Interacts with SIMC1. Interacts with UTP25; the interaction is required for CAPN3 translocation to the nucleolus. In terms of tissue distribution, skeletal muscle.

The protein resides in the cytoplasm. It is found in the nucleus. Its subcellular location is the nucleolus. The catalysed reaction is Broad endopeptidase activity.. Its activity is regulated as follows. Activated by micromolar concentrations of calcium and inhibited by calpastatin. Calcium-regulated non-lysosomal thiol-protease. Proteolytically cleaves CTBP1. Mediates, with UTP25, the proteasome-independent degradation of p53/TP53. This Sus scrofa (Pig) protein is Calpain-3 (CAPN3).